Here is a 137-residue protein sequence, read N- to C-terminus: Small ribosomal subunit protein uS12 (137 aa).

The tract at residues 1 to 57 (MPTINQLVRKPRKSKVKKSKSPALNVGYNSRKKVQTNVSSPQKRGVATRVGTMTPKK) is disordered. Residues 9 to 20 (RKPRKSKVKKSK) show a composition bias toward basic residues. 3-methylthioaspartic acid is present on D102.

It belongs to the universal ribosomal protein uS12 family. In terms of assembly, part of the 30S ribosomal subunit. Contacts proteins S8 and S17. May interact with IF1 in the 30S initiation complex.

Its function is as follows. With S4 and S5 plays an important role in translational accuracy. Functionally, interacts with and stabilizes bases of the 16S rRNA that are involved in tRNA selection in the A site and with the mRNA backbone. Located at the interface of the 30S and 50S subunits, it traverses the body of the 30S subunit contacting proteins on the other side and probably holding the rRNA structure together. The combined cluster of proteins S8, S12 and S17 appears to hold together the shoulder and platform of the 30S subunit. In Streptococcus suis (strain 05ZYH33), this protein is Small ribosomal subunit protein uS12.